Consider the following 2055-residue polypeptide: Dedicator of cytokinesis protein 9 (2055 aa).

Phosphoserine occurs at positions 178 and 181. The PH domain maps to 185–292 (GITKHGWLYK…WVTVLNKILQ (108 aa)). A disordered region spans residues 301–326 (EKRNGDPHEDDEQSKLEGSGSGLDSY). A phosphoserine mark is found at Ser444 and Ser453. The region spanning 649 to 827 (SNHLYVYPKY…PLLKISTHLV (179 aa)) is the C2 DOCK-type domain. 2 positions are modified to phosphoserine: Ser936 and Ser1244. Residue Thr1250 is modified to Phosphothreonine. Residues 1253-1291 (INSVRNADSRGSLISTDSGNSLPDRNPEKSNSLDKQQQS) are disordered. Phosphoserine occurs at positions 1264, 1270, and 1273. The segment covering 1264–1276 (SLISTDSGNSLPD) has biased composition (polar residues). The 442-residue stretch at 1614–2055 (KSYASTPELR…LSDIMREQMG (442 aa)) folds into the DOCKER domain. The interval 1679 to 2055 (DEEASMMEDV…LSDIMREQMG (377 aa)) is interaction with CDC42.

The protein belongs to the DOCK family. Homodimer. Interacts preferentially with nucleotide-depleted CDC42. Expressed in lung. Also detected in Peyers patches, thymus, brain and lymph nodes. Expressed in Purkinje cells.

The protein localises to the endomembrane system. Its function is as follows. Guanine nucleotide-exchange factor (GEF) that activates CDC42 by exchanging bound GDP for free GTP. Overexpression induces filopodia formation. This chain is Dedicator of cytokinesis protein 9, found in Mus musculus (Mouse).